A 563-amino-acid polypeptide reads, in one-letter code: Putative solute carrier family 26 member 10P (563 aa).

A run of 5 helical transmembrane segments spans residues 45–65, 75–91, 116–136, 152–172, and 352–372; these read ALLA…PVLI, LSTG…GSAV, VGVA…MFVL, ALTS…LLGL, and LAGL…GPFF. In terms of domain architecture, STAS spans 406–541; the sequence is RVDFLLQVPG…VSVQDAAAYA (136 aa).

Belongs to the SLC26A/SulP transporter (TC 2.A.53) family.

It localises to the membrane. In terms of biological role, chloride/bicarbonate exchanger. This Homo sapiens (Human) protein is Putative solute carrier family 26 member 10P (SLC26A10P).